The sequence spans 364 residues: DNA replication and repair protein RecF (364 aa).

ATP is bound at residue 30-37 (GDNAQGKT).

Belongs to the RecF family.

Its subcellular location is the cytoplasm. Functionally, the RecF protein is involved in DNA metabolism; it is required for DNA replication and normal SOS inducibility. RecF binds preferentially to single-stranded, linear DNA. It also seems to bind ATP. This Clostridium kluyveri (strain ATCC 8527 / DSM 555 / NBRC 12016 / NCIMB 10680 / K1) protein is DNA replication and repair protein RecF.